Here is a 287-residue protein sequence, read N- to C-terminus: MGLAGTKTKQRFGLDPRNTAWSNDTSRFGHLQLEKFGWKPGMGLGMSPTSSHKTHIKVSIKDDNLGLGAKIKRTERKDEFDNGECAGLDVFQRILGRLNGKQEEISKELDIQRKQKIIDGKWGIHFVRGDVLASTWDPETKKLKSYSNDKKRSRDDDDEKLSSKNKSKKQKKDKKDKKDKKDKKDKKDKKDKKDKTEKKEKKEKKEKKEKKEKKDKKDKKDKKDKIDKKDKKDKKSLKNNIEVSTTASNIPSTVSTRLSVRSRWIKQKRAATMDSKALNEIFMVTNT.

The G-patch domain occupies 25–72 (TSRFGHLQLEKFGWKPGMGLGMSPTSSHKTHIKVSIKDDNLGLGAKIK). Positions 143-155 (LKSYSNDKKRSRD) are enriched in basic and acidic residues. The interval 143-254 (LKSYSNDKKR…TTASNIPSTV (112 aa)) is disordered. The span at 163–190 (SKNKSKKQKKDKKDKKDKKDKKDKKDKK) shows a compositional bias: basic residues. Over residues 191–200 (DKKDKTEKKE) the composition is skewed to basic and acidic residues. Residues 201-220 (KKEKKEKKEKKEKKDKKDKK) are compositionally biased toward basic residues. Positions 221 to 230 (DKKDKIDKKD) are enriched in basic and acidic residues. Residues 239–251 (NNIEVSTTASNIP) are compositionally biased toward polar residues.

It belongs to the PINX1 family.

The protein localises to the nucleus. Its subcellular location is the nucleolus. In terms of biological role, involved in rRNA-processing at A0, A1 and A2 sites and negatively regulates telomerase. This chain is Protein PXR1 (PXR1), found in Vanderwaltozyma polyspora (strain ATCC 22028 / DSM 70294 / BCRC 21397 / CBS 2163 / NBRC 10782 / NRRL Y-8283 / UCD 57-17) (Kluyveromyces polysporus).